A 216-amino-acid chain; its full sequence is MRSLPALPKRLHGPSIWALYILGFLPAVWGFYLGATGRLPGNAVKEFEHLLGIWALRFLIATLAITPIRDLFGVNWLRYRRALGLLAFYYVMMHFLTYMVLDQTLLLPAIVADIARRPFITIGMAALVLLIPLAVTSNIWSIRRLGQRWNKLHRLVYVIAAAGALHFAMSVKVVGPEQMLYLFLVAVLVAWRAVRKRFLRWRRQGTAPMRSQARAG.

A run of 5 helical transmembrane segments spans residues 16–36 (IWALYILGFLPAVWGFYLGAT), 48–68 (EHLLGIWALRFLIATLAITPI), 82–102 (ALGLLAFYYVMMHFLTYMVLD), 119–139 (FITIGMAALVLLIPLAVTSNI), and 155–175 (LVYVIAAAGALHFAMSVKVVG).

It belongs to the MsrQ family. Heterodimer of a catalytic subunit (MsrP) and a heme-binding subunit (MsrQ). The cofactor is FMN. It depends on heme b as a cofactor.

Its subcellular location is the cell inner membrane. Functionally, part of the MsrPQ system that repairs oxidized periplasmic proteins containing methionine sulfoxide residues (Met-O), using respiratory chain electrons. Thus protects these proteins from oxidative-stress damage caused by reactive species of oxygen and chlorine generated by the host defense mechanisms. MsrPQ is essential for the maintenance of envelope integrity under bleach stress, rescuing a wide series of structurally unrelated periplasmic proteins from methionine oxidation. MsrQ provides electrons for reduction to the reductase catalytic subunit MsrP, using the quinone pool of the respiratory chain. The polypeptide is Protein-methionine-sulfoxide reductase heme-binding subunit MsrQ (Rhizobium meliloti (strain 1021) (Ensifer meliloti)).